The following is a 95-amino-acid chain: Large ribosomal subunit protein bL25 (95 aa).

The protein belongs to the bacterial ribosomal protein bL25 family. As to quaternary structure, part of the 50S ribosomal subunit; part of the 5S rRNA/L5/L18/L25 subcomplex. Contacts the 5S rRNA. Binds to the 5S rRNA independently of L5 and L18.

Functionally, this is one of the proteins that binds to the 5S RNA in the ribosome where it forms part of the central protuberance. The chain is Large ribosomal subunit protein bL25 from Tolumonas auensis (strain DSM 9187 / NBRC 110442 / TA 4).